Reading from the N-terminus, the 206-residue chain is Ribonuclease HII (206 aa).

The 180-residue stretch at Ala-27–His-206 folds into the RNase H type-2 domain. Asp-33, Glu-34, and Asp-125 together coordinate a divalent metal cation.

It belongs to the RNase HII family. It depends on Mn(2+) as a cofactor. The cofactor is Mg(2+).

It localises to the cytoplasm. The enzyme catalyses Endonucleolytic cleavage to 5'-phosphomonoester.. Endonuclease that specifically degrades the RNA of RNA-DNA hybrids. This chain is Ribonuclease HII, found in Moorella thermoacetica (strain ATCC 39073 / JCM 9320).